The sequence spans 417 residues: UDP-N-acetylglucosamine 1-carboxyvinyltransferase (417 aa).

Phosphoenolpyruvate is bound at residue 22-23 (KN). UDP-N-acetyl-alpha-D-glucosamine is bound at residue Arg93. Cys117 acts as the Proton donor in catalysis. At Cys117 the chain carries 2-(S-cysteinyl)pyruvic acid O-phosphothioketal. UDP-N-acetyl-alpha-D-glucosamine is bound by residues Asp304 and Ile326.

It belongs to the EPSP synthase family. MurA subfamily.

It localises to the cytoplasm. The catalysed reaction is phosphoenolpyruvate + UDP-N-acetyl-alpha-D-glucosamine = UDP-N-acetyl-3-O-(1-carboxyvinyl)-alpha-D-glucosamine + phosphate. The protein operates within cell wall biogenesis; peptidoglycan biosynthesis. In terms of biological role, cell wall formation. Adds enolpyruvyl to UDP-N-acetylglucosamine. In Neisseria gonorrhoeae (strain ATCC 700825 / FA 1090), this protein is UDP-N-acetylglucosamine 1-carboxyvinyltransferase.